A 152-amino-acid polypeptide reads, in one-letter code: MMIINVLLCLGIFCFLLYAFYDQFFMDCWKGKTLLKVHLKKQGQKDALIFSLLIGIIIYQTYTNLSSATLYLLTALILLSVYAAFIRAPMLLLKEKGFFFGNIYFQYADIHQVNLAENNILVIDMKNGKRLLVHLLTDQDREQVIQFFGGYK.

The next 3 helical transmembrane spans lie at 1–21, 45–65, and 66–86; these read MMII…YAFY, KDAL…YTNL, and SSAT…AAFI.

It belongs to the UPF0266 family.

The protein localises to the cell inner membrane. The protein is UPF0266 membrane protein PM0830 of Pasteurella multocida (strain Pm70).